Consider the following 514-residue polypeptide: ATP synthase subunit alpha (514 aa).

170–177 (GDRQTGKT) contacts ATP.

This sequence belongs to the ATPase alpha/beta chains family. In terms of assembly, F-type ATPases have 2 components, CF(1) - the catalytic core - and CF(0) - the membrane proton channel. CF(1) has five subunits: alpha(3), beta(3), gamma(1), delta(1), epsilon(1). CF(0) has three main subunits: a(1), b(2) and c(9-12). The alpha and beta chains form an alternating ring which encloses part of the gamma chain. CF(1) is attached to CF(0) by a central stalk formed by the gamma and epsilon chains, while a peripheral stalk is formed by the delta and b chains.

Its subcellular location is the cell inner membrane. It catalyses the reaction ATP + H2O + 4 H(+)(in) = ADP + phosphate + 5 H(+)(out). Produces ATP from ADP in the presence of a proton gradient across the membrane. The alpha chain is a regulatory subunit. The sequence is that of ATP synthase subunit alpha from Acinetobacter baumannii (strain AB307-0294).